A 196-amino-acid polypeptide reads, in one-letter code: Calcium channel flower (196 aa).

3 consecutive transmembrane segments (helical) span residues 35-55, 70-92, and 113-133; these read LGIV…LSII, LAGF…QVGS, and AVPP…GLIF.

It belongs to the calcium channel flower family. As to quaternary structure, homomultimer. Associates with the dally/ magu complex.

The protein resides in the cell membrane. The protein localises to the cytoplasmic vesicle. It is found in the secretory vesicle. Its subcellular location is the synaptic vesicle membrane. It localises to the presynaptic cell membrane. The protein resides in the endosome. Channel activity is inhibited by La(3+), which reduces Ca(2+) influx and thus inhibits it's function in promoting activity-dependent bulk endocytosis (ADBE) in response to high stimuli. Transmembrane protein which mediates synaptic endocytosis, fitness-based cell culling, neuronal culling, morphogen gradient scaling, and calcium transport. Regulates synaptic endocytosis and hence couples exo- with endocytosis. Controls two major modes of synaptic vesicle (SV) endocytosis in the synaptic boutons of neuromuscular junctions (NMJs); Ca(2+) channel-independent Clathrin-mediated endocytosis (CME) in response to mild stimulation, and Ca(2+) channel-dependent activity-dependent bulk endocytosis (ADBE) in response to strong stimulation. Functions in ADBE and subsequent SV reformation from bulk endosomes by initiating Ca(2+) channel-dependent phosphatidylinositol 4,5-bisphosphate (PtdIns(4,5)P2) compartmentalization in synaptic boutons. There it acts at the periactive zone to provide the low Ca(2+) levels required to initiate Calcineurin activation and upregulate PtdIns(4,5)P2. Conversely PtdIns(4,5)P2 enhances fwe Ca(2+) channel-activity, establishing a positive feedback loop that induces PtdIns(4,5)P2 microdomain at the periactive zone. These microdomains trigger bulk membrane invagination (i.e. ADBE) by triggering actin polymerization while also promoting localization of fwe to bulk endosomes, thereby removing the ADBE trigger to reduce endocytosis and prevent excess membrane uptake. PtdIns(4,5)P2 then promotes SV reformation from the bulk endosomes, to coordinate ADBE and subsequent SV reformation. Different combinations of the flower isoforms at the cell membrane are also required for the identification and elimination of suboptimal or supernumerary cells during development, regeneration, and adulthood. Required for the recognition and elimination of unfit cells in the developing wing during cell competition. In the developing pupal retina, mediates the elimination of unwanted postmitotic neurons, including supernumerary photoreceptor neurons that form at the periphery of the retina and are contained within incomplete ommatidia units. Also required for efficient elimination and replacement of old neurons by newly generated neurons during regeneration in the adult brain following mechanical injury. Downstream of the flower fitness fingerprints, cells identified as unwanted or unfit are eliminated via apoptosis through the expression of ahuizotl (azot). However, the cells marked for elimination by the flower isoforms only undergo apoptosis if additional thresholds are met; (1) their neighboring fit/healthy cells express different levels of the fwe isoforms, and (2) the levels of the protective signal SPARC expressed by the loser or unwanted cells are unable to inhibit caspase activation. These additional thresholds for flower-mediated apoptosis, allows useful cells to recover from transient and limited stress before they are unnecessarily eliminated. Functions with dally and magu in a mechanism of scaling, which utilises apoptosis to ensure that the dpp morphogen gradient, which mediates organ growth, remains proportional to the size of the growing wing. In this mechanism, fwe represses dally- and Magu-dependent activity in expanding the gradient, and dally/Magu inhibits fwe-dependent apoptosis to keep cell death rate low. When the levels of these different proteins are optimally regulated the gradient correctly scales with organ growth but when this fails, fwe-mediated apoptosis is activated to trim the developing tissue to match the correct size of the gradient. In Drosophila grimshawi (Hawaiian fruit fly), this protein is Calcium channel flower.